The primary structure comprises 353 residues: uncharacterized protein (353 aa).

Positions 18-83 (NIEFPCLLSE…TLWRDVFLRF (66 aa)) constitute an HTH luxR-type domain. Residues 42–61 (VNEISKRRNRSIKTVSCQKM) constitute a DNA-binding region (H-T-H motif). An EAL domain is found at 98-350 (NSSVLPVVSS…AFVRKLLASL (253 aa)).

This is an uncharacterized protein from Escherichia coli (strain K12).